The primary structure comprises 238 residues: Proenkephalin-A (238 aa).

The first 25 residues, methionine 1–threonine 25, serve as a signal peptide directing secretion. 3 disulfide bridges follow: cysteine 27-cysteine 50, cysteine 31-cysteine 54, and cysteine 34-cysteine 66. The interval glutamine 76–histidine 103 is disordered. 3 consecutive propeptides follow at residues serine 124–valine 167, alanine 177–leucine 195, and valine 206–glutamine 230.

This sequence belongs to the opioid neuropeptide precursor family. As to expression, expressed by the venom gland. Moderately expressed in the venom gland transcriptome.

Its subcellular location is the secreted. Functionally, met-enkephalins compete with and mimic the effects of opiate drugs. They play a role in a number of physiologic functions, including pain perception and responses to stress. Enkephalin peptides found in Meiacanthus fangblennies induce physiological effects via their interaction with delta-type opioid receptors (OPRD1) (tested on M.grammistes). Therefore, finding a proenkephalin sequence in M.atrodorsalis venom suggests that this protein act in the same manner. In Meiacanthus atrodorsalis (Forktail blenny), this protein is Proenkephalin-A.